The sequence spans 424 residues: Histidine--tRNA ligase (424 aa).

It belongs to the class-II aminoacyl-tRNA synthetase family. As to quaternary structure, homodimer.

The protein localises to the cytoplasm. It catalyses the reaction tRNA(His) + L-histidine + ATP = L-histidyl-tRNA(His) + AMP + diphosphate + H(+). In Edwardsiella ictaluri (strain 93-146), this protein is Histidine--tRNA ligase.